A 38-amino-acid polypeptide reads, in one-letter code: Photosystem II reaction center protein X (38 aa).

Residues 9-29 traverse the membrane as a helical segment; that stretch reads IASLFAGAFIALAIGGVLVFI.

Belongs to the PsbX family. Type 1 subfamily. PSII is composed of 1 copy each of membrane proteins PsbA, PsbB, PsbC, PsbD, PsbE, PsbF, PsbH, PsbI, PsbJ, PsbK, PsbL, PsbM, PsbT, PsbX, PsbY, PsbZ, Psb30/Ycf12, at least 3 peripheral proteins of the oxygen-evolving complex and a large number of cofactors. It forms dimeric complexes.

The protein localises to the plastid. It is found in the chloroplast thylakoid membrane. Its function is as follows. Involved in the binding and/or turnover of quinones at the Q(B) site of photosystem II (PSII). PSII is a light-driven water plastoquinone oxidoreductase, using light energy to abstract electrons from H(2)O, generating a proton gradient subsequently used for ATP formation. The protein is Photosystem II reaction center protein X of Phaeodactylum tricornutum (strain CCAP 1055/1).